A 269-amino-acid polypeptide reads, in one-letter code: Protein tsct-1 (269 aa).

This sequence belongs to the TSC-22/Dip/Bun family.

The polypeptide is Protein tsct-1 (Caenorhabditis elegans).